The sequence spans 586 residues: Phosphomethylpyrimidine synthase (586 aa).

The interval Met1 to Pro59 is disordered. A compositionally biased stretch (basic and acidic residues) spans Val22–Glu39. Residues Asn193, Met222, Tyr251, His287, Ser307–Gly309, Asp348–Arg351, and Glu387 contribute to the substrate site. Zn(2+) is bound at residue His391. Tyr414 is a substrate binding site. Zn(2+) is bound at residue His455. Cys535, Cys538, and Cys543 together coordinate [4Fe-4S] cluster.

It belongs to the ThiC family. [4Fe-4S] cluster serves as cofactor.

The catalysed reaction is 5-amino-1-(5-phospho-beta-D-ribosyl)imidazole + S-adenosyl-L-methionine = 4-amino-2-methyl-5-(phosphooxymethyl)pyrimidine + CO + 5'-deoxyadenosine + formate + L-methionine + 3 H(+). It functions in the pathway cofactor biosynthesis; thiamine diphosphate biosynthesis. Functionally, catalyzes the synthesis of the hydroxymethylpyrimidine phosphate (HMP-P) moiety of thiamine from aminoimidazole ribotide (AIR) in a radical S-adenosyl-L-methionine (SAM)-dependent reaction. The sequence is that of Phosphomethylpyrimidine synthase from Bacillus cereus (strain ATCC 14579 / DSM 31 / CCUG 7414 / JCM 2152 / NBRC 15305 / NCIMB 9373 / NCTC 2599 / NRRL B-3711).